A 419-amino-acid chain; its full sequence is Mitochondrial chaperone BCS1 (419 aa).

Residues 2 to 15 lie on the Mitochondrial intermembrane side of the membrane; sequence PLSDFILALKDNPY. The helical transmembrane segment at 16–32 threads the bilayer; the sequence is FGAGFGLVGVGTALALA. Residues 33 to 419 are Mitochondrial matrix-facing; the sequence is RKGVQLGLVA…AIHNAESLRR (387 aa). Tyr-181 carries the phosphotyrosine modification. 230–237 serves as a coordination point for ATP; that stretch reads GPPGCGKS.

It belongs to the AAA ATPase family. BCS1 subfamily. In terms of assembly, interacts with LETM1. In terms of tissue distribution, ubiquitous.

The protein resides in the mitochondrion inner membrane. It catalyses the reaction ATP + H2O = ADP + phosphate + H(+). Functionally, chaperone necessary for the incorporation of Rieske iron-sulfur protein UQCRFS1 into the mitochondrial respiratory chain complex III. Plays an important role in the maintenance of mitochondrial tubular networks, respiratory chain assembly and formation of the LETM1 complex. The polypeptide is Mitochondrial chaperone BCS1 (BCS1L) (Homo sapiens (Human)).